A 557-amino-acid polypeptide reads, in one-letter code: MVRITCTISFSTDDEPVGRSRQGSFDDHYKRVVWSKDGEQGKYQEEGDDPDAYDGPEDEEAPDISLATFFGGCSLHGANHVFVEDKKFSIRQGLWALVFLLAISMFLLQVVDRVIYYLQYDYVTLLDERNAKNMTFPAITLCNYNTFRRSQLSYSDLLFMGPLLGYEDNMAPGIPLAPEPDRQGSRFSLAEFFNRTRHRMDDMLLECNFAGKECGAEHWREIFTRYGKCYTFNSGQDGRPLLITTKGGMGNGLEIMLDIQQDEYLPVWGETDETTFEAGIKVQIHTQDEPPFIDQLGFGVAPGFQTFVSCQEQRLTYLPPPWGDCKATPIDSDFFNTYSITACRIDCETRYLVENCNCRMVHMPGDAPYCTPEQYKECADPALDFLVERDNDYCVCETPCNMTRYGKELSFVRIPSKASAKYLAKKYNKTEQYISDNIMVLDIFFEALNYETIEQKKAYELAGLLGDIGGQMGLFIGASILTILELFDYLYEVIKFKLCRCAKKKHQRSNNNERGAVLSLDDVKRHAPCDNLRTPSTYPANMLPHHPGQGNFEDFTC.

Topologically, residues 1–98 (MVRITCTISF…SIRQGLWALV (98 aa)) are cytoplasmic. Over residues 36 to 45 (KDGEQGKYQE) the composition is skewed to basic and acidic residues. The disordered stretch occupies residues 36–57 (KDGEQGKYQEEGDDPDAYDGPE). Positions 46-57 (EGDDPDAYDGPE) are enriched in acidic residues. A helical transmembrane segment spans residues 99 to 115 (FLLAISMFLLQVVDRVI). Residues 116–460 (YYLQYDYVTL…ETIEQKKAYE (345 aa)) are Extracellular-facing. N-linked (GlcNAc...) asparagine glycans are attached at residues asparagine 133 and asparagine 194. 7 disulfide bridges follow: cysteine 142-cysteine 229, cysteine 207-cysteine 214, cysteine 325-cysteine 400, cysteine 343-cysteine 396, cysteine 347-cysteine 394, cysteine 356-cysteine 378, and cysteine 358-cysteine 370. N-linked (GlcNAc...) asparagine glycosylation is found at asparagine 401 and asparagine 428. The chain crosses the membrane as a discontinuously helical span at residues 461–491 (LAGLLGDIGGQMGLFIGASILTILELFDYLY). The GAS motif; ion selectivity filter signature appears at 477-479 (GAS). At 492–557 (EVIKFKLCRC…GQGNFEDFTC (66 aa)) the chain is on the cytoplasmic side.

It belongs to the amiloride-sensitive sodium channel (TC 1.A.6) family. ASIC1 subfamily. In terms of assembly, homotrimer. Heterotrimer; with other ASIC proteins producing channel with different properties. As to expression, expressed in central nervous system.

The protein resides in the cell membrane. The protein localises to the postsynaptic cell membrane. It localises to the cell projection. It is found in the dendrite. It catalyses the reaction Na(+)(in) = Na(+)(out). It carries out the reaction K(+)(in) = K(+)(out). The enzyme catalyses Li(+)(in) = Li(+)(out). The catalysed reaction is Ca(2+)(in) = Ca(2+)(out). Its activity is regulated as follows. Inhibited by the diuretic drug amiloride. Forms voltage-independent, pH-gated trimeric sodium channels that act as postsynaptic excitatory receptors in the nervous system, playing a crucial role in regulating synaptic plasticity, learning, and memory. Upon extracellular pH drop this channel elicits transient, fast activating, and completely desensitizing inward currents. Displays high selectivity for sodium ions but can also permit the permeation of other cations. This is Acid-sensing ion channel 1B (asic1b) from Danio rerio (Zebrafish).